Consider the following 525-residue polypeptide: Glucose-6-phosphate isomerase (525 aa).

The active-site Proton donor is Glu347. Active-site residues include His378 and Lys493.

Belongs to the GPI family.

The protein localises to the cytoplasm. It catalyses the reaction alpha-D-glucose 6-phosphate = beta-D-fructose 6-phosphate. The protein operates within carbohydrate biosynthesis; gluconeogenesis. It functions in the pathway carbohydrate degradation; glycolysis; D-glyceraldehyde 3-phosphate and glycerone phosphate from D-glucose: step 2/4. In terms of biological role, catalyzes the reversible isomerization of glucose-6-phosphate to fructose-6-phosphate. This is Glucose-6-phosphate isomerase from Chlamydia trachomatis serovar L2 (strain ATCC VR-902B / DSM 19102 / 434/Bu).